The chain runs to 247 residues: tRNA pseudouridine synthase A 1 (247 aa).

Catalysis depends on D53, which acts as the Nucleophile. Y111 serves as a coordination point for substrate.

It belongs to the tRNA pseudouridine synthase TruA family. In terms of assembly, homodimer.

It catalyses the reaction uridine(38/39/40) in tRNA = pseudouridine(38/39/40) in tRNA. Its function is as follows. Formation of pseudouridine at positions 38, 39 and 40 in the anticodon stem and loop of transfer RNAs. This chain is tRNA pseudouridine synthase A 1, found in Bacillus cereus (strain ATCC 14579 / DSM 31 / CCUG 7414 / JCM 2152 / NBRC 15305 / NCIMB 9373 / NCTC 2599 / NRRL B-3711).